Consider the following 101-residue polypeptide: Small ribosomal subunit protein uS14A (101 aa).

Residues 35–56 (TSSYEQRLDAQRALSRQPRDAS) are disordered.

This sequence belongs to the universal ribosomal protein uS14 family. In terms of assembly, part of the 30S ribosomal subunit. Contacts proteins S3 and S10.

Functionally, binds 16S rRNA, required for the assembly of 30S particles and may also be responsible for determining the conformation of the 16S rRNA at the A site. The sequence is that of Small ribosomal subunit protein uS14A from Mycobacterium marinum (strain ATCC BAA-535 / M).